The chain runs to 1010 residues: Plasma membrane ATPase 2 (1010 aa).

Residues 1–14 (MQRNNGEGRPEGMH) show a composition bias toward basic and acidic residues. Disordered stretches follow at residues 1–126 (MQRN…EDED) and 139–165 (QDQE…PEEL). The Cytoplasmic segment spans residues 1 to 201 (MQRNNGEGRP…KEEKTNNIKK (201 aa)). Residues 25 to 34 (FKNNASPQDD) show a composition bias toward polar residues. A compositionally biased stretch (acidic residues) spans 42–52 (YEEGGVEDSAV). Polar residues predominate over residues 68–106 (APNTHAQQANLQSGNTSITHETQSTSRGQEATTSPSLSA). Residues 140 to 151 (DQEEEQVEEEES) show a composition bias toward acidic residues. Residues 202–222 (FLSFFVGPIQFVMELAAALAA) traverse the membrane as a helical segment. Residues 223–226 (GLRD) are Extracellular-facing. Residues 227–246 (WVDFGVICALLLLNATVGFV) form a helical membrane-spanning segment. Residues 247 to 377 (QEYQAGSIVD…SQGHFTEVLN (131 aa)) lie on the Cytoplasmic side of the membrane. Residues 378 to 399 (GIGTILLVLVILTLLCIYTAAF) form a helical membrane-spanning segment. Over 400–410 (YRSVRLAALLE) the chain is Extracellular. Residues 411 to 433 (YTLAITIIGVPVGLPAVVTTTMA) form a helical membrane-spanning segment. Topologically, residues 434 to 805 (VGAAYLAKKK…LIIRNQLLNL (372 aa)) are cytoplasmic. D464 (4-aspartylphosphate intermediate) is an active-site residue. Residues D720 and D724 each coordinate Mg(2+). The chain crosses the membrane as a helical span at residues 806-824 (ELIVFIAIFADVATLAIAY). Over 825 to 840 (DNAPYAMKPVKWNLPR) the chain is Extracellular. The helical transmembrane segment at 841 to 860 (LWGLATIVGILLAIGTWIVN) threads the bilayer. The Cytoplasmic segment spans residues 861–912 (TTMIAQGQNRGIVQNFGVQDEVLFLQISLTENWLIFITRCSGPFWSSFPSWQ). Residues 913–933 (LSGAVLVVDILATLFCIFGWF) form a helical membrane-spanning segment. The Extracellular segment spans residues 934 to 946 (KGGHQTSIVAVIR). A helical transmembrane segment spans residues 947–963 (IWMYSFGIFCLIAGVYY). Over 964 to 1010 (ILSESSSFDRWMHGKHKERGTTRKLEDFVMQLQRTSTHHEAEGKVTS) the chain is Cytoplasmic.

The protein belongs to the cation transport ATPase (P-type) (TC 3.A.3) family. Type IIIA subfamily. In terms of processing, in addition to transient phosphorylation of the active site Asp residue, this protein, but not the product of the pma1 locus, is phosphorylated efficiently in isolated plasma membrane.

Its subcellular location is the cell membrane. The enzyme catalyses ATP + H2O + H(+)(in) = ADP + phosphate + 2 H(+)(out). Functionally, the plasma membrane ATPase of plants and fungi is a hydrogen ion pump. The proton gradient it generates drives the active transport of nutrients by H(+)-symport. The resulting external acidification and/or internal alkinization may mediate growth responses. The polypeptide is Plasma membrane ATPase 2 (pma2) (Schizosaccharomyces pombe (strain 972 / ATCC 24843) (Fission yeast)).